A 72-amino-acid polypeptide reads, in one-letter code: Metallothionein-like protein 1B (72 aa).

This sequence belongs to the metallothionein superfamily. Type 15 family. In terms of tissue distribution, expressed in leaves of mature plants.

Its function is as follows. Metallothioneins have a high content of cysteine residues that bind various heavy metals. Functions as a metal chelator of nickel (Ni), cadmium (Cd), zinc (Zn) and copper (Cu). Possesses higher affinity for Ni and Cd ions compared to Zn and Cu ions. The protein is Metallothionein-like protein 1B (MT1B) of Oryza sativa subsp. japonica (Rice).